Here is a 31-residue protein sequence, read N- to C-terminus: Mycofactocin precursor peptide (31 aa).

This sequence belongs to the mycofactocin precursor peptide family. In terms of processing, the post-translational modifications that lead to mycofactocin involve oxidative decarboxylation of the C-terminal tyrosine residue catalyzed by MftC, introduction of a tyramine-valine cross-link, removal of the modified C-terminal dipeptide by MftE. The released dipeptide then undergoes oxidative deamination by MftD, glycosylation by MftF and methylation by an unknown enzyme.

Functionally, precursor peptide that leads to mycofactocin (MFT) after extensive post-translational modifications by enzymes encoded by adjacent genes. Mycofactocin acts as a redox cofactor of nicotinamide-dependent oxidoreductases encoded in the same locus. Is required for the in vivo ethanol assimilation in M.smegmatis. The sequence is that of Mycofactocin precursor peptide from Mycolicibacterium smegmatis (strain ATCC 700084 / mc(2)155) (Mycobacterium smegmatis).